Reading from the N-terminus, the 238-residue chain is Aspartate/glutamate leucyltransferase (238 aa).

The protein belongs to the R-transferase family. Bpt subfamily.

The protein localises to the cytoplasm. It catalyses the reaction N-terminal L-glutamyl-[protein] + L-leucyl-tRNA(Leu) = N-terminal L-leucyl-L-glutamyl-[protein] + tRNA(Leu) + H(+). The enzyme catalyses N-terminal L-aspartyl-[protein] + L-leucyl-tRNA(Leu) = N-terminal L-leucyl-L-aspartyl-[protein] + tRNA(Leu) + H(+). Functionally, functions in the N-end rule pathway of protein degradation where it conjugates Leu from its aminoacyl-tRNA to the N-termini of proteins containing an N-terminal aspartate or glutamate. In Shewanella sp. (strain ANA-3), this protein is Aspartate/glutamate leucyltransferase.